The following is a 159-amino-acid chain: Ribosomal RNA large subunit methyltransferase H (159 aa).

S-adenosyl-L-methionine contacts are provided by residues Leu76, Gly108, and 127 to 132; that span reads FSKMTF.

Belongs to the RNA methyltransferase RlmH family. In terms of assembly, homodimer.

The protein resides in the cytoplasm. The catalysed reaction is pseudouridine(1915) in 23S rRNA + S-adenosyl-L-methionine = N(3)-methylpseudouridine(1915) in 23S rRNA + S-adenosyl-L-homocysteine + H(+). Its function is as follows. Specifically methylates the pseudouridine at position 1915 (m3Psi1915) in 23S rRNA. This chain is Ribosomal RNA large subunit methyltransferase H, found in Exiguobacterium sibiricum (strain DSM 17290 / CCUG 55495 / CIP 109462 / JCM 13490 / 255-15).